The chain runs to 560 residues: Aluminum-activated malate transporter 12 (560 aa).

6 consecutive transmembrane segments (helical) span residues 54-74, 78-98, 104-124, 130-150, 156-176, and 189-209; these read VGLS…FKGI, AIWA…ATLC, GLGT…ANDS, AIFI…IRFI, NYDY…VSSY, and FYTI…VFPI. The tract at residues 386–421 is disordered; that stretch reads LHRHNNKHQNGSISNNKHHQRNSSNSGKDLNGDVSL. Over residues 407 to 421 the composition is skewed to polar residues; it reads NSSNSGKDLNGDVSL.

This sequence belongs to the aromatic acid exporter (TC 2.A.85) family. As to expression, expressed in roots, stems, leaves, flowers and pollen. Mainly detected in the roots vascular stele and in the leaves guard cells.

It localises to the cell membrane. Functionally, malate-sensitive anion transporter permeable to chloride, nitrate, sulfate and malate. Involved in dark-, CO(2)-, abscisic acid- and water-deficient-induced stomatal closure. Belongs to the R-type anion channels. This is Aluminum-activated malate transporter 12 (ALMT12) from Arabidopsis thaliana (Mouse-ear cress).